Reading from the N-terminus, the 375-residue chain is Heat shock protein 42 (375 aa).

Disordered stretches follow at residues 21–59 (TGQR…HPLY), 81–127 (SPEY…YYHC), 154–238 (PYEG…ETRM), and 347–375 (PKPK…TVEN). Residues 22-48 (GQRGQQGYPRQPQRPQRYHPHYGQVHV) show a composition bias toward low complexity. Residues 49-58 (GGHHPRHHPL) show a composition bias toward basic residues. Acidic residues-rich tracts occupy residues 85-101 (GYDD…EDMV) and 158-168 (TEPEIEANTEQ). A compositionally biased stretch (basic and acidic residues) spans 169 to 197 (EGEKGEEKDKKDKSEAPKEEAGETNKEKP). Residues S182, S213, S214, S215, and S223 each carry the phosphoserine modification. A sHSP domain is found at 237–356 (RMDLPFSPEV…PKPKKRIAIE (120 aa)). Residues 357 to 367 (EIPDEELEFEE) are compositionally biased toward acidic residues.

The protein belongs to the small heat shock protein (HSP20) family. Forms oligomeric complexes. Interacts with itself.

This chain is Heat shock protein 42 (HSP42), found in Saccharomyces cerevisiae (strain ATCC 204508 / S288c) (Baker's yeast).